The following is a 270-amino-acid chain: MQPYSNFSGLQQRTNNQVVIGSDMLAGTNKKGVLVPDADGYYLTPLGAYGTRNSAGMFYEMASGVSMFNPDSPLMRRVKKGVLFMEYKHPEPYRKDGTRMNEHEYLMRIRQIDDDRVCAHIKELILVDSTDEKGLPIKLVLGKCKPYGPFGKYFEASITNPSQNTYCSVRSITQDDPMRGIKYTREISTWDMVGEGGIYGANKWNSPALENYEDQLMVITPDTLYQVQRERERQINMGFECSDITNVTDLAKSLGWDISPVKHRRPGFMR.

Active-site residues include His89, Ser168, and Asp191.

In terms of processing, the self-cleavage of the C-terminus allows the activation of the protease.

The protein resides in the virion. Its function is as follows. Serine protease that is responsible for cleaving many of the prohead proteins during a major morphogenetic step in viral capsid maturation. Cleaves the major capsid protein at 7 [A,G,S]-X-E recognition sites. This Pseudomonas aeruginosa protein is Capsid maturation protease.